The following is a 296-amino-acid chain: Small ribosomal subunit protein uS2 (296 aa).

Over residues 274-284 (ASSAAPADTWA) the composition is skewed to low complexity. The disordered stretch occupies residues 274–296 (ASSAAPADTWAGESGNPDAGVKW).

This sequence belongs to the universal ribosomal protein uS2 family. In terms of assembly, component of the small ribosomal subunit. Mature ribosomes consist of a small (40S) and a large (60S) subunit. The 40S subunit contains about 33 different proteins and 1 molecule of RNA (18S). The 60S subunit contains about 49 different proteins and 3 molecules of RNA (25S, 5.8S and 5S). Interacts with RPS21.

It localises to the cytoplasm. In terms of biological role, required for the assembly and/or stability of the 40S ribosomal subunit. Required for the processing of the 20S rRNA-precursor to mature 18S rRNA in a late step of the maturation of 40S ribosomal subunits. In Ajellomyces capsulatus (strain G186AR / H82 / ATCC MYA-2454 / RMSCC 2432) (Darling's disease fungus), this protein is Small ribosomal subunit protein uS2.